Consider the following 129-residue polypeptide: Large ribosomal subunit protein eL31 (129 aa).

The disordered stretch occupies residues 1-46 (MSQETTATKQEEQKTSELQQQKKEEQKPQQATTTTKEEKKTKPEKE). 2 stretches are compositionally biased toward basic and acidic residues: residues 9–27 (KQEE…EEQK) and 35–46 (TKEEKKTKPEKE).

The protein belongs to the eukaryotic ribosomal protein eL31 family.

This Sulfolobus acidocaldarius (strain ATCC 33909 / DSM 639 / JCM 8929 / NBRC 15157 / NCIMB 11770) protein is Large ribosomal subunit protein eL31 (rpl31e).